A 153-amino-acid polypeptide reads, in one-letter code: Selenoprotein F (153 aa).

The N-terminal stretch at 1 to 19 (MAGEVYLLWLLPLLQGLAS) is a signal peptide. Residue Sec-84 is a non-standard amino acid, selenocysteine.

The protein belongs to the selenoprotein M/F family. As to expression, higher levels in polster, prechordal plate, axis, otic vesicle and somites. Lower levels in fin buds.

The protein localises to the endoplasmic reticulum lumen. Its function is as follows. May be involved in redox reactions associated with the formation of disulfide bonds. May contribute to the quality control of protein folding in the endoplasmic reticulum. The protein is Selenoprotein F of Danio rerio (Zebrafish).